The primary structure comprises 208 residues: Predicted GPI-anchored protein 37 (208 aa).

The signal sequence occupies residues 1-18; that stretch reads MLFTQLIILLTVTSQALS. Positions 33-93 are disordered; that stretch reads TKRLGGGSRG…SSSSSGSRNW (61 aa). A compositionally biased stretch (gly residues) spans 36-53; sequence LGGGSRGGSSSGSRGGSS. Positions 54-63 are enriched in low complexity; sequence SGSSSGSSSG. Asparagine 173 carries an N-linked (GlcNAc...) asparagine glycan. Serine 185 is lipidated: GPI-anchor amidated serine. The propeptide at 186–208 is removed in mature form; that stretch reads SSLNIPSTHFYLIGFAAAYSIVL.

This sequence belongs to the PGA37 family.

The protein localises to the cell membrane. In terms of biological role, predicted GPI-anchored protein which may have a role during host infection. The protein is Predicted GPI-anchored protein 37 (PGA37) of Candida albicans (strain SC5314 / ATCC MYA-2876) (Yeast).